A 106-amino-acid chain; its full sequence is Large ribosomal subunit protein P1 (106 aa).

Residues 69–106 are disordered; it reads AAAAAPAEEAKEEAKEEEEEEEEVKEEEAIEGLGALFG. Residues 83 to 98 are compositionally biased toward acidic residues; sequence KEEEEEEEEVKEEEAI.

Belongs to the eukaryotic ribosomal protein P1/P2 family. As to quaternary structure, part of the 50S ribosomal subunit. Homodimer, it forms part of the ribosomal stalk which helps the ribosome interact with GTP-bound translation factors. Forms a heptameric uL10/P0(P1)2(P1)2(P1)2 complex, where uL10/P0 forms an elongated spine to which the P1 dimers bind in a sequential fashion.

Functionally, forms part of the ribosomal stalk, playing a central role in the interaction of the ribosome with GTP-bound translation factors. This is Large ribosomal subunit protein P1 from Archaeoglobus fulgidus (strain ATCC 49558 / DSM 4304 / JCM 9628 / NBRC 100126 / VC-16).